We begin with the raw amino-acid sequence, 99 residues long: Co-chaperonin GroES (99 aa).

It belongs to the GroES chaperonin family. In terms of assembly, heptamer of 7 subunits arranged in a ring. Interacts with the chaperonin GroEL.

The protein resides in the cytoplasm. Together with the chaperonin GroEL, plays an essential role in assisting protein folding. The GroEL-GroES system forms a nano-cage that allows encapsulation of the non-native substrate proteins and provides a physical environment optimized to promote and accelerate protein folding. GroES binds to the apical surface of the GroEL ring, thereby capping the opening of the GroEL channel. In Corynebacterium glutamicum (strain R), this protein is Co-chaperonin GroES.